We begin with the raw amino-acid sequence, 163 residues long: Probable ribosome biogenesis protein RLP24 (163 aa).

This sequence belongs to the eukaryotic ribosomal protein eL24 family. In terms of assembly, associated with nucleolar and cytoplasmic pre-60S particles. At the end of biogenesis it dissociates from cytoplasmic pre-60S particles and is likely to be exchanged for its ribosomal homolog, RPL24.

It localises to the nucleus. The protein resides in the nucleolus. In terms of biological role, involved in the biogenesis of the 60S ribosomal subunit. Ensures the docking of GTPBP4/NOG1 to pre-60S particles. This chain is Probable ribosome biogenesis protein RLP24 (Rsl24d1), found in Rattus norvegicus (Rat).